The primary structure comprises 91 residues: Putative defensin-like protein 83 (91 aa).

The signal sequence occupies residues methionine 1 to glycine 27. 4 disulfides stabilise this stretch: cysteine 32–cysteine 71, cysteine 37–cysteine 57, cysteine 43–cysteine 69, and cysteine 47–cysteine 70.

The protein belongs to the DEFL family.

Its subcellular location is the secreted. This chain is Putative defensin-like protein 83 (LCR46), found in Arabidopsis thaliana (Mouse-ear cress).